A 141-amino-acid chain; its full sequence is Large ribosomal subunit protein uL11 (141 aa).

It belongs to the universal ribosomal protein uL11 family. As to quaternary structure, part of the ribosomal stalk of the 50S ribosomal subunit. Interacts with L10 and the large rRNA to form the base of the stalk. L10 forms an elongated spine to which L12 dimers bind in a sequential fashion forming a multimeric L10(L12)X complex. One or more lysine residues are methylated.

In terms of biological role, forms part of the ribosomal stalk which helps the ribosome interact with GTP-bound translation factors. This Desulfotalea psychrophila (strain LSv54 / DSM 12343) protein is Large ribosomal subunit protein uL11.